Consider the following 166-residue polypeptide: Phosphodiesterase MJ0936 (166 aa).

Asp8, His10, Asp36, Asn59, His97, His120, and His122 together coordinate Mn(2+). Residues Asp8, His10, Asp36, Asn59, His97, His120, and His122 each contribute to the Ni(2+) site.

The protein belongs to the metallophosphoesterase superfamily. YfcE family. As to quaternary structure, monomer. Ni(2+) serves as cofactor. Requires Mn(2+) as cofactor.

Competitively inhibited by phosphate. In terms of biological role, shows phosphodiesterase activity. Hydrolyzes phosphodiesters bonds in the artificial chromogenic substrates bis-p-nitrophenyl phosphate (bis-pNPP), and less efficiently thymidine 5'-monophosphate p-nitrophenyl ester (pNP-TMP) and p-nitrophenylphosphorylcholine (pNPPC). No catalytic activity was found toward cAMP or cGMP, nucleotides or phospholipase substrates such as phosphatidylcholine. The physiological substrate is unknown. The sequence is that of Phosphodiesterase MJ0936 from Methanocaldococcus jannaschii (strain ATCC 43067 / DSM 2661 / JAL-1 / JCM 10045 / NBRC 100440) (Methanococcus jannaschii).